A 77-amino-acid chain; its full sequence is Dermaseptin-B9 (77 aa).

An N-terminal signal peptide occupies residues 1 to 22 (MAFLKKSLFLVLFLGLVSLSVC). 2 propeptides span residues 23–43 (EEEKRENEDEEEQEDDEQSEE) and 76–77 (EQ).

It belongs to the frog skin active peptide (FSAP) family. Dermaseptin subfamily. As to expression, expressed by the skin glands.

The protein localises to the secreted. Functionally, has antimicrobial activity. Exhibits a bactericidal activity towards several species of mollicutes, firmicutes and gracilicutes. This peptide is membranotropic and it efficiently depolarizes the plasma membrane. This chain is Dermaseptin-B9 (DRG3), found in Phyllomedusa bicolor (Two-colored leaf frog).